Reading from the N-terminus, the 366-residue chain is Histidinol-phosphate aminotransferase (366 aa).

The residue at position 228 (lysine 228) is an N6-(pyridoxal phosphate)lysine.

It belongs to the class-II pyridoxal-phosphate-dependent aminotransferase family. Histidinol-phosphate aminotransferase subfamily. Homodimer. Pyridoxal 5'-phosphate serves as cofactor.

It catalyses the reaction L-histidinol phosphate + 2-oxoglutarate = 3-(imidazol-4-yl)-2-oxopropyl phosphate + L-glutamate. It participates in amino-acid biosynthesis; L-histidine biosynthesis; L-histidine from 5-phospho-alpha-D-ribose 1-diphosphate: step 7/9. The sequence is that of Histidinol-phosphate aminotransferase from Corynebacterium diphtheriae (strain ATCC 700971 / NCTC 13129 / Biotype gravis).